The chain runs to 1528 residues: Mitogen-activated protein kinase kinae kinase MCK1 (1528 aa).

The span at 1 to 11 (MYPGSSQSRPY) shows a compositional bias: low complexity. 10 disordered regions span residues 1-84 (MYPG…PAPR), 109-208 (ATAP…VPGI), 303-418 (VHAR…NNVR), 449-481 (INGRGARQSPSDLGDNSAGTDSPVSARDTKLPF), 607-652 (VKPP…EARL), 695-731 (GKPVDFDTPRHSPYEDKNTDRMFPTRNAPAPPVAPSA), 746-786 (VQGS…SQPM), 811-929 (SANN…SDDG), 943-1012 (KKAK…EDGK), and 1086-1191 (ATPL…ALLR). The segment covering 12–21 (QVPPPPPMSP) has biased composition (pro residues). Residues 22–31 (PLSQMHQQMS) are compositionally biased toward low complexity. The span at 53-64 (APPPPPPGPPPA) shows a compositional bias: pro residues. Low complexity predominate over residues 157–173 (SSQTWQTTSSSSTNTAS). Composition is skewed to polar residues over residues 174–183 (VNDNVQSNAP), 191–205 (NNSASITGTQSSSNV), and 318–327 (HGRQGSINSR). Positions 328–337 (GNDKGTHDGS) are enriched in basic and acidic residues. A compositionally biased stretch (polar residues) spans 338–363 (DSPNTPSSQSRSTTIPTFPDGSSFSN). Low complexity predominate over residues 396-408 (SSTPKSSTLSVSP). The segment covering 409–418 (HSSRFGNNVR) has biased composition (polar residues). 2 stretches are compositionally biased toward polar residues: residues 613 to 622 (SQQSTWSAGD) and 630 to 641 (GTSSSMSRQQNT). Basic and acidic residues-rich tracts occupy residues 642-652 (LKDDQSEEARL) and 698-714 (VDFDTPRHSPYEDKNTD). Polar residues predominate over residues 846–860 (RSQTAGDLSPISQMP). The segment covering 917-928 (QSDDDSGDDSDD) has biased composition (acidic residues). Polar residues predominate over residues 977 to 986 (VSFNSPQSAR). Residues 1001–1012 (PKSDMWDSEDGK) are compositionally biased toward basic and acidic residues. Residues 1086–1111 (ATPLNSLPPSRVQSMYNESDTLGSDE) are compositionally biased toward polar residues. The span at 1142–1152 (SIREKARGAHE) shows a compositional bias: basic and acidic residues. Residues 1158–1188 (TQTSMAAPQGLSRSGGTPATETQPTQNNSSA) are compositionally biased toward polar residues. In terms of domain architecture, Protein kinase spans 1238-1507 (WFKGQLIGKG…NKLLSQHPFC (270 aa)). Residues 1244–1252 (IGKGTYGRV) and Lys-1267 contribute to the ATP site.

Belongs to the protein kinase superfamily. STE Ser/Thr protein kinase family. MAP kinase kinase kinase subfamily. As to quaternary structure, interacts with the adapter protein MST50 and MIP11.

The catalysed reaction is L-seryl-[protein] + ATP = O-phospho-L-seryl-[protein] + ADP + H(+). It catalyses the reaction L-threonyl-[protein] + ATP = O-phospho-L-threonyl-[protein] + ADP + H(+). Mitogen-activated protein kinase kinase kinase; part of the MCK1-MKK2-MPS1 MAP kinase (MAPK) signal transduction cascade that is essential for appressorium formation, penetration and invasive growth. Beside its role in pathogenesis, the MPS1 cascade is active in conidiation and cellular stress responses. Targets downstream of the the MPS1-MAPK pathway include transcription factors MIG1 and SWI6, as well as GSK1 and MPG1. The chain is Mitogen-activated protein kinase kinae kinase MCK1 from Pyricularia oryzae (strain 70-15 / ATCC MYA-4617 / FGSC 8958) (Rice blast fungus).